Here is a 689-residue protein sequence, read N- to C-terminus: Glycine--tRNA ligase beta subunit (689 aa).

The protein belongs to the class-II aminoacyl-tRNA synthetase family. In terms of assembly, tetramer of two alpha and two beta subunits.

Its subcellular location is the cytoplasm. The enzyme catalyses tRNA(Gly) + glycine + ATP = glycyl-tRNA(Gly) + AMP + diphosphate. In Actinobacillus pleuropneumoniae serotype 5b (strain L20), this protein is Glycine--tRNA ligase beta subunit.